The following is a 414-amino-acid chain: Riboflavin biosynthesis protein RibBA (414 aa).

Residues 1 to 204 are DHBP synthase; the sequence is MTRFDTIERA…IADMIAWRRK (204 aa). D-ribulose 5-phosphate is bound by residues 28 to 29, Asp33, 141 to 145, and Glu165; these read RE and RPGHT. Glu29 lines the Mg(2+) pocket. His144 lines the Mg(2+) pocket. The tract at residues 205–414 is GTP cyclohydrolase II; that stretch reads HEKQVVRVAE…DDLDLGETAQ (210 aa). Position 255-259 (255-259) interacts with GTP; the sequence is RVHSE. Zn(2+) is bound by residues Cys260, Cys271, and Cys273. Residues Gln276, 299–301, and Thr321 each bind GTP; that span reads EGR. Asp333 functions as the Proton acceptor; for GTP cyclohydrolase activity in the catalytic mechanism. Residue Arg335 is the Nucleophile; for GTP cyclohydrolase activity of the active site. Thr356 and Lys361 together coordinate GTP.

In the N-terminal section; belongs to the DHBP synthase family. The protein in the C-terminal section; belongs to the GTP cyclohydrolase II family. The cofactor is Mg(2+). Mn(2+) is required as a cofactor. Zn(2+) serves as cofactor.

It catalyses the reaction D-ribulose 5-phosphate = (2S)-2-hydroxy-3-oxobutyl phosphate + formate + H(+). The catalysed reaction is GTP + 4 H2O = 2,5-diamino-6-hydroxy-4-(5-phosphoribosylamino)-pyrimidine + formate + 2 phosphate + 3 H(+). The protein operates within cofactor biosynthesis; riboflavin biosynthesis; 2-hydroxy-3-oxobutyl phosphate from D-ribulose 5-phosphate: step 1/1. It participates in cofactor biosynthesis; riboflavin biosynthesis; 5-amino-6-(D-ribitylamino)uracil from GTP: step 1/4. Functionally, catalyzes the conversion of D-ribulose 5-phosphate to formate and 3,4-dihydroxy-2-butanone 4-phosphate. Its function is as follows. Catalyzes the conversion of GTP to 2,5-diamino-6-ribosylamino-4(3H)-pyrimidinone 5'-phosphate (DARP), formate and pyrophosphate. This Nocardia farcinica (strain IFM 10152) protein is Riboflavin biosynthesis protein RibBA.